The primary structure comprises 103 residues: Auxin-responsive protein SAUR50 (103 aa).

It belongs to the ARG7 family.

Effector of hormonal and environmental signals in plant growth. Involved in heliotropism. This is Auxin-responsive protein SAUR50 from Helianthus annuus (Common sunflower).